The chain runs to 588 residues: ATP-dependent lipid A-core flippase (588 aa).

6 helical membrane-spanning segments follow: residues 23–43 (FWPV…IDAG), 56–76 (FITI…IGIT), 141–161 (DALT…TVMM), 162–182 (VICW…GIIV), 257–277 (LVIA…STVI), and 278–298 (TISA…IKPM). The region spanning 28 to 310 (LLGVLANILY…LTTLNATIQR (283 aa)) is the ABC transmembrane type-1 domain. The region spanning 342–576 (IEFKHVYHAY…DGHYAQLYKV (235 aa)) is the ABC transporter domain. 375–382 (GHSGSGKT) is a binding site for ATP.

The protein belongs to the ABC transporter superfamily. Lipid exporter (TC 3.A.1.106) family. As to quaternary structure, homodimer.

It is found in the cell inner membrane. It carries out the reaction ATP + H2O + lipid A-core oligosaccharideSide 1 = ADP + phosphate + lipid A-core oligosaccharideSide 2.. Functionally, involved in lipopolysaccharide (LPS) biosynthesis. Translocates lipid A-core from the inner to the outer leaflet of the inner membrane. Transmembrane domains (TMD) form a pore in the inner membrane and the ATP-binding domain (NBD) is responsible for energy generation. This chain is ATP-dependent lipid A-core flippase, found in Legionella pneumophila (strain Paris).